Reading from the N-terminus, the 161-residue chain is Large ribosomal subunit protein uL15 (161 aa).

Positions 1–10 are enriched in basic and acidic residues; it reads MKLNELRDNP. A disordered region spans residues 1–42; it reads MKLNELRDNPGARPKSKRLGRGIGSGKGKTSGKGVKGQKARE. Positions 21 to 35 are enriched in gly residues; that stretch reads RGIGSGKGKTSGKGV.

It belongs to the universal ribosomal protein uL15 family. As to quaternary structure, part of the 50S ribosomal subunit.

Functionally, binds to the 23S rRNA. The polypeptide is Large ribosomal subunit protein uL15 (Acidiphilium cryptum (strain JF-5)).